A 464-amino-acid chain; its full sequence is ATP synthase subunit beta (464 aa).

150-157 (GGAGVGKT) contributes to the ATP binding site.

Belongs to the ATPase alpha/beta chains family. As to quaternary structure, F-type ATPases have 2 components, CF(1) - the catalytic core - and CF(0) - the membrane proton channel. CF(1) has five subunits: alpha(3), beta(3), gamma(1), delta(1), epsilon(1). CF(0) has three main subunits: a(1), b(2) and c(9-12). The alpha and beta chains form an alternating ring which encloses part of the gamma chain. CF(1) is attached to CF(0) by a central stalk formed by the gamma and epsilon chains, while a peripheral stalk is formed by the delta and b chains.

It is found in the cell membrane. It catalyses the reaction ATP + H2O + 4 H(+)(in) = ADP + phosphate + 5 H(+)(out). In terms of biological role, produces ATP from ADP in the presence of a proton gradient across the membrane. The catalytic sites are hosted primarily by the beta subunits. The protein is ATP synthase subunit beta of Dehalococcoides mccartyi (strain ATCC BAA-2266 / KCTC 15142 / 195) (Dehalococcoides ethenogenes (strain 195)).